A 635-amino-acid polypeptide reads, in one-letter code: Biosynthetic arginine decarboxylase (635 aa).

N6-(pyridoxal phosphate)lysine is present on Lys-100. 282 to 292 (LDIGGGLGVDY) provides a ligand contact to substrate.

This sequence belongs to the Orn/Lys/Arg decarboxylase class-II family. SpeA subfamily. Mg(2+) serves as cofactor. Requires pyridoxal 5'-phosphate as cofactor.

The catalysed reaction is L-arginine + H(+) = agmatine + CO2. The protein operates within amine and polyamine biosynthesis; agmatine biosynthesis; agmatine from L-arginine: step 1/1. In terms of biological role, catalyzes the biosynthesis of agmatine from arginine. This Geobacter sp. (strain M21) protein is Biosynthetic arginine decarboxylase.